Consider the following 256-residue polypeptide: Thiazole synthase (256 aa).

Lysine 91 serves as the catalytic Schiff-base intermediate with DXP. Residues glycine 152, 179–180 (AG), and 201–202 (NT) contribute to the 1-deoxy-D-xylulose 5-phosphate site.

Belongs to the ThiG family. As to quaternary structure, homotetramer. Forms heterodimers with either ThiH or ThiS.

Its subcellular location is the cytoplasm. The catalysed reaction is [ThiS sulfur-carrier protein]-C-terminal-Gly-aminoethanethioate + 2-iminoacetate + 1-deoxy-D-xylulose 5-phosphate = [ThiS sulfur-carrier protein]-C-terminal Gly-Gly + 2-[(2R,5Z)-2-carboxy-4-methylthiazol-5(2H)-ylidene]ethyl phosphate + 2 H2O + H(+). Its pathway is cofactor biosynthesis; thiamine diphosphate biosynthesis. In terms of biological role, catalyzes the rearrangement of 1-deoxy-D-xylulose 5-phosphate (DXP) to produce the thiazole phosphate moiety of thiamine. Sulfur is provided by the thiocarboxylate moiety of the carrier protein ThiS. In vitro, sulfur can be provided by H(2)S. The polypeptide is Thiazole synthase (Erwinia tasmaniensis (strain DSM 17950 / CFBP 7177 / CIP 109463 / NCPPB 4357 / Et1/99)).